Reading from the N-terminus, the 231-residue chain is Tol-Pal system protein TolQ (231 aa).

The next 3 helical transmembrane spans lie at 20-40 (IVVQLVMLTLVAASVTSWIMI), 134-154 (FLATVGSTSPYVGLFGTVWGI), and 176-196 (IAEALIATAIGLFAAIPAVIA).

The protein belongs to the ExbB/TolQ family. In terms of assembly, the Tol-Pal system is composed of five core proteins: the inner membrane proteins TolA, TolQ and TolR, the periplasmic protein TolB and the outer membrane protein Pal. They form a network linking the inner and outer membranes and the peptidoglycan layer.

Its subcellular location is the cell inner membrane. Part of the Tol-Pal system, which plays a role in outer membrane invagination during cell division and is important for maintaining outer membrane integrity. The polypeptide is Tol-Pal system protein TolQ (Pseudomonas aeruginosa (strain ATCC 15692 / DSM 22644 / CIP 104116 / JCM 14847 / LMG 12228 / 1C / PRS 101 / PAO1)).